Consider the following 156-residue polypeptide: Small ribosomal subunit protein uS7 (156 aa).

The protein belongs to the universal ribosomal protein uS7 family. In terms of assembly, part of the 30S ribosomal subunit. Contacts proteins S9 and S11.

In terms of biological role, one of the primary rRNA binding proteins, it binds directly to 16S rRNA where it nucleates assembly of the head domain of the 30S subunit. Is located at the subunit interface close to the decoding center, probably blocks exit of the E-site tRNA. This is Small ribosomal subunit protein uS7 from Anaeromyxobacter dehalogenans (strain 2CP-1 / ATCC BAA-258).